A 21-amino-acid polypeptide reads, in one-letter code: Protein YmjD (21 aa).

This Escherichia coli (strain K12) protein is Protein YmjD (ymjD).